Here is a 392-residue protein sequence, read N- to C-terminus: Protein O-glucosyltransferase 1 (392 aa).

Positions 1–23 (MEWWASSPLRLWLLLFLLPSAQG) are cleaved as a signal peptide. 2 N-linked (GlcNAc...) asparagine glycosylation sites follow: Asn40 and Asn53. Disulfide bonds link Cys49-Cys56, Cys54-Cys357, Cys102-Cys108, and Cys263-Cys286. The tract at residues 103–107 (MFPSR) is interaction with the consensus sequence C-X-S-X-[PA]-C in peptide substrates. Asp133 (proton donor/acceptor) is an active-site residue. The interval 172–178 (AVWPIYP) is interaction with the consensus sequence C-X-S-X-[PA]-C in peptide substrates. Residue Tyr177 coordinates UDP-alpha-D-glucose. Asn204 carries an N-linked (GlcNAc...) asparagine glycan. Residues Ser212, Arg218, and 274-279 (VAASFR) each bind UDP-alpha-D-glucose. Residue Asn373 is glycosylated (N-linked (GlcNAc...) asparagine). The short motif at 389 to 392 (KTEL) is the Prevents secretion from ER element.

The protein belongs to the glycosyltransferase 90 family. In terms of tissue distribution, expressed in most adult tissues at different intensities. Abundantly expressed in liver. Expressed also in brain, heart, skeletal muscle, spleen, kidney, placenta, lung and peripheral blood leukocyte. Not detectable in colon, thymus and small intestine. Expressed in the epidermis, especially in the upper parts, stratum spinosum and stratum granulosum (at protein level).

It localises to the endoplasmic reticulum lumen. It carries out the reaction L-seryl-[EGF-like domain protein] + UDP-alpha-D-xylose = 3-O-(beta-D-xylosyl)-L-seryl-[EGF-like domain protein] + UDP + H(+). The enzyme catalyses L-seryl-[EGF-like domain protein] + UDP-alpha-D-glucose = 3-O-(beta-D-glucosyl)-L-seryl-[EGF-like domain protein] + UDP + H(+). Its pathway is protein modification; protein glycosylation. In terms of biological role, dual specificity glycosyltransferase that catalyzes the transfer of glucose and xylose from UDP-glucose and UDP-xylose, respectively, to a serine residue found in the consensus sequence of C-X-S-X-P-C. Specifically targets extracellular EGF repeats of protein such as CRB2, F7, F9 and NOTCH2. Acts as a positive regulator of Notch signaling by mediating O-glucosylation of Notch, leading to regulate muscle development. Notch glucosylation does not affect Notch ligand binding. Required during early development to promote gastrulation: acts by mediating O-glucosylation of CRB2, which is required for CRB2 localization to the cell membrane. The chain is Protein O-glucosyltransferase 1 from Homo sapiens (Human).